Here is a 466-residue protein sequence, read N- to C-terminus: 5-hydroxytryptamine receptor (466 aa).

A disordered region spans residues Met-1–Ser-21. Over Met-1 to Ser-66 the chain is Extracellular. Asn-2, Asn-10, Asn-29, Asn-41, Asn-45, and Asn-50 each carry an N-linked (GlcNAc...) asparagine glycan. The span at Asn-10–Ser-21 shows a compositional bias: polar residues. Residues Val-67–Ile-89 traverse the membrane as a helical segment. At Glu-90 to Tyr-99 the chain is on the cytoplasmic side. The helical transmembrane segment at Leu-100–Val-121 threads the bilayer. Topologically, residues Tyr-122–Asp-136 are extracellular. Cysteines 135 and 215 form a disulfide. The helical transmembrane segment at Met-137–Thr-158 threads the bilayer. The Cytoplasmic segment spans residues Asp-159–Arg-177. Residues Ile-178–Trp-200 form a helical membrane-spanning segment. Over Lys-201–Thr-228 the chain is Extracellular. The helical transmembrane segment at Met-229 to Ala-250 threads the bilayer. Residues Arg-251–Thr-386 lie on the Cytoplasmic side of the membrane. 2 disordered regions span residues Arg-255–Arg-282 and Val-339–Arg-360. A compositionally biased stretch (low complexity) spans Val-339–Thr-353. A helical transmembrane segment spans residues Leu-387–Ile-410. At Cys-411–Tyr-419 the chain is on the extracellular side. Residues Leu-420–Phe-442 traverse the membrane as a helical segment. Topologically, residues Ser-443–Phe-466 are cytoplasmic.

The protein belongs to the G-protein coupled receptor 1 family.

The protein localises to the cell membrane. In terms of biological role, this is a receptor for 5-hydroxytryptamine (serotonin), a biogenic hormone that function as a neurotransmitter, a hormone, and a mitogen. The sequence is that of 5-hydroxytryptamine receptor from Heliothis virescens (Tobacco budworm moth).